The sequence spans 101 residues: Rho GTPase-activating protein 39 (101 aa).

The region spanning 1–96 is the Rho-GAP domain; that stretch reads YEQCIAHYES…VLIQHLDTSF (96 aa).

As to expression, preoptic area and testis.

The chain is Rho GTPase-activating protein 39 (Arhgap39) from Rattus norvegicus (Rat).